Consider the following 184-residue polypeptide: Photosystem I assembly protein Ycf4 (184 aa).

2 helical membrane-spanning segments follow: residues 22–42 and 57–77; these read FCWA…GTSS and IIFF…LFIS.

Belongs to the Ycf4 family.

It is found in the plastid. The protein resides in the chloroplast thylakoid membrane. Its function is as follows. Seems to be required for the assembly of the photosystem I complex. This Platanus occidentalis (Sycamore) protein is Photosystem I assembly protein Ycf4.